The following is a 499-amino-acid chain: Terpentedienyl-diphosphate synthase (499 aa).

D284 and D286 together coordinate Mg(2+). The DXDD motif motif lies at D284–D287.

The protein belongs to the terpene synthase family. In terms of assembly, monomer. Mg(2+) serves as cofactor.

The catalysed reaction is (2E,6E,10E)-geranylgeranyl diphosphate = terpentedienyl diphosphate. The protein operates within antibiotic biosynthesis. Its function is as follows. Involved in the production of the isoprenoid antibiotic terpentecin. Converts geranylgeranyl diphosphate (GGDP) into terpentedienol diphosphate (TDP) by a protonation-initiated cyclization. In Kitasatospora griseola (Streptomyces griseolosporeus), this protein is Terpentedienyl-diphosphate synthase (cyc1).